The following is a 391-amino-acid chain: Heme A synthase (391 aa).

The next 8 helical transmembrane spans lie at 37–57 (IRLWLMALFLLVMAMIVVGGL), 121–141 (RQLGRVIGLVWAVGFLGFLAA), 152–172 (LLALGALGGLQGGIGWWMVAS), 186–206 (LATHLGLAFIILGLIAWQALL), 229–249 (TTVLIGVAFLQIVLGALVAGI), 298–318 (FLHRMAGYTLAALGLIFWIFG), 332–352 (LLAMALLAQILLGVGTVLSAA), and 354–374 (WQVAIAHQVGAVVIWVLILHA). Histidine 300 provides a ligand contact to heme. Histidine 360 lines the heme pocket.

Belongs to the COX15/CtaA family. Type 2 subfamily. As to quaternary structure, interacts with CtaB. It depends on heme b as a cofactor.

The protein localises to the cell membrane. The enzyme catalyses Fe(II)-heme o + 2 A + H2O = Fe(II)-heme a + 2 AH2. It participates in porphyrin-containing compound metabolism; heme A biosynthesis; heme A from heme O: step 1/1. Catalyzes the conversion of heme O to heme A by two successive hydroxylations of the methyl group at C8. The first hydroxylation forms heme I, the second hydroxylation results in an unstable dihydroxymethyl group, which spontaneously dehydrates, resulting in the formyl group of heme A. This is Heme A synthase from Cereibacter sphaeroides (strain ATCC 17023 / DSM 158 / JCM 6121 / CCUG 31486 / LMG 2827 / NBRC 12203 / NCIMB 8253 / ATH 2.4.1.) (Rhodobacter sphaeroides).